The primary structure comprises 229 residues: Endonuclease V (229 aa).

2 residues coordinate Mg(2+): Asp-36 and Asp-104.

It belongs to the endonuclease V family. Requires Mg(2+) as cofactor.

It is found in the cytoplasm. The enzyme catalyses Endonucleolytic cleavage at apurinic or apyrimidinic sites to products with a 5'-phosphate.. Functionally, DNA repair enzyme involved in the repair of deaminated bases. Selectively cleaves double-stranded DNA at the second phosphodiester bond 3' to a deoxyinosine leaving behind the intact lesion on the nicked DNA. This is Endonuclease V from Pectobacterium carotovorum subsp. carotovorum (strain PC1).